The following is a 134-amino-acid chain: Translation initiation factor 2 subunit beta (134 aa).

It belongs to the eIF-2-beta/eIF-5 family. In terms of assembly, heterotrimer composed of an alpha, a beta and a gamma chain.

Functionally, eIF-2 functions in the early steps of protein synthesis by forming a ternary complex with GTP and initiator tRNA. In Pyrobaculum calidifontis (strain DSM 21063 / JCM 11548 / VA1), this protein is Translation initiation factor 2 subunit beta.